Reading from the N-terminus, the 371-residue chain is MQHGIKRVKLSEEAKRLKLEKDQIKIKNYRQLTDEIFELRANENYSDEALIKTNELLIINPEFYTIWNYRREILINNYSSSNDKDDQIYEDILNQDLNFVLVQLKKFPKCYWIWNHRRWLLFELVKLGKVNWKYEFGVVSKLLDLDQRNFHGWHYRRFVVKNMELECKNDTTLILKINLDEFNYTTLKIQKDFSNFSAWHNRTKLIPKIYNLIQQQQQQQQKDGKIFGDLPGIELFQNPILLLKNDLEMIKTGVYMSPEDTSVWLYLYWLLTDDLFTNAFKSHQQDYMNILHEQLQLINEVNEMEKEDTGQDNVGCLKSMIFINALIQNENNKPVLTEQVKSCLKQLAKIDPLRKNKYLDQLAGNAPIFHH.

PFTA repeat units follow at residues 45-79, 92-126, 131-165, 177-211, and 242-276; these read YSDE…NNYS, ILNQ…ELVK, NWKY…NMEL, INLD…KIYN, and LLKN…DDLF.

This sequence belongs to the protein prenyltransferase subunit alpha family. As to quaternary structure, heterodimer of an alpha and a beta subunit.

The catalysed reaction is geranylgeranyl diphosphate + L-cysteinyl-[protein] = S-geranylgeranyl-L-cysteinyl-[protein] + diphosphate. Its function is as follows. Catalyzes the transfer of a geranyl-geranyl moiety from geranyl-geranyl pyrophosphate to proteins having the C-terminal -XCC or -XCXC, where both cysteines may become modified. Acts on YPT1 and SEC4. This is Geranylgeranyl transferase type-2 subunit alpha (BET4) from Candida albicans (Yeast).